We begin with the raw amino-acid sequence, 431 residues long: Shaggy-related protein kinase beta (431 aa).

Positions 12–24 (SGRNFVSSDNVGE) are enriched in polar residues. A disordered region spans residues 12–65 (SGRNFVSSDNVGETETPRSKPNQNREETESTETTSYEKDSVSSSENSDHLPKEI). Basic and acidic residues-rich tracts occupy residues 26-39 (ETPR…REET) and 46-65 (SYEK…PKEI). In terms of domain architecture, Protein kinase spans 102–386 (YRAEHVIGTG…ALEACAHPFF (285 aa)). Residues 108-116 (IGTGSFGVV) and K131 contribute to the ATP site. Catalysis depends on D227, which acts as the Proton acceptor. At Y262 the chain carries Phosphotyrosine.

Belongs to the protein kinase superfamily. CMGC Ser/Thr protein kinase family. GSK-3 subfamily. Autophosphorylated mainly on threonine and serine residues.

It carries out the reaction L-seryl-[protein] + ATP = O-phospho-L-seryl-[protein] + ADP + H(+). It catalyses the reaction L-threonyl-[protein] + ATP = O-phospho-L-threonyl-[protein] + ADP + H(+). Its function is as follows. May mediate extracellular signals to regulate transcription in differentiating cells. This chain is Shaggy-related protein kinase beta, found in Arabidopsis thaliana (Mouse-ear cress).